The primary structure comprises 420 residues: Gamma-glutamyl phosphate reductase (420 aa).

Belongs to the gamma-glutamyl phosphate reductase family.

It is found in the cytoplasm. It carries out the reaction L-glutamate 5-semialdehyde + phosphate + NADP(+) = L-glutamyl 5-phosphate + NADPH + H(+). The protein operates within amino-acid biosynthesis; L-proline biosynthesis; L-glutamate 5-semialdehyde from L-glutamate: step 2/2. Functionally, catalyzes the NADPH-dependent reduction of L-glutamate 5-phosphate into L-glutamate 5-semialdehyde and phosphate. The product spontaneously undergoes cyclization to form 1-pyrroline-5-carboxylate. This Streptococcus gordonii (strain Challis / ATCC 35105 / BCRC 15272 / CH1 / DL1 / V288) protein is Gamma-glutamyl phosphate reductase.